Consider the following 360-residue polypeptide: Cannabinoid receptor 2 (360 aa).

At 1-33 the chain is on the extracellular side; that stretch reads MEECWVTEIANGSKDGLDSNPMKDYMILSGPQK. Residue N11 is glycosylated (N-linked (GlcNAc...) asparagine). A helical transmembrane segment spans residues 34–59; it reads TAVAVLCTLLGLLSALENVAVLYLIL. Topologically, residues 60–71 are cytoplasmic; sequence SSHQLRRKPSYL. The helical transmembrane segment at 72–92 threads the bilayer; the sequence is FIGSLAGADFLASVVFACSFV. Over 93–104 the chain is Extracellular; the sequence is NFHVFHGVDSKA. A helical membrane pass occupies residues 105 to 129; it reads VFLLKIGSVTMTFTASVGSLLLTAI. Topologically, residues 130–149 are cytoplasmic; that stretch reads DRYLCLRYPPSYKALLTRGR. The helical transmembrane segment at 150–172 threads the bilayer; it reads ALVTLGIMWVLSALVSYLPLMGW. Residues 173 to 188 lie on the Extracellular side of the membrane; it reads TCCPRPCSELFPLIPN. The helical transmembrane segment at 189-214 threads the bilayer; it reads DYLLSWLLFIAFLFSGIIYTYGHVLW. Topologically, residues 215-246 are cytoplasmic; sequence KAHQHVASLSGHQDRQVPGMARMRLDVRLAKT. The chain crosses the membrane as a helical span at residues 247-267; it reads LGLVLAVLLICWFPVLALMAH. The Extracellular segment spans residues 268–279; it reads SLATTLSDQVKK. A helical membrane pass occupies residues 280-301; that stretch reads AFAFCSMLCLINSMVNPVIYAL. Residues 302–360 lie on the Cytoplasmic side of the membrane; sequence RSGEIRSSAHHCLAHWKKCVRGLGSEAKEEAPRSSVTETEADGKITPWPDSRDLDLSDC. The interval 327-360 is disordered; it reads EAKEEAPRSSVTETEADGKITPWPDSRDLDLSDC. Phosphoserine is present on residues S335 and S336. At T338 the chain carries Phosphothreonine. Basic and acidic residues predominate over residues 351–360; the sequence is DSRDLDLSDC. S352 bears the Phosphoserine mark.

Belongs to the G-protein coupled receptor 1 family. In terms of processing, constitutively phosphorylated on Ser-352; phosphorylation increases cell internalization and desensitizes the receptor. Preferentially expressed in cells of the immune system with higher expression in B-cells and NK cells (at protein level). Expressed in skin in suprabasal layers and hair follicles (at protein level). Highly expressed in tonsil and to a lower extent in spleen, peripheral blood mononuclear cells, and thymus. PubMed:14657172 could not detect expression in normal brain. Expressed in brain by perivascular microglial cells and dorsal root ganglion sensory neurons (at protein level). Two isoforms are produced by alternative promoter usage and differ only in the 5' UTR: isoform CB2A is observed predominantly in testis with some expression in brain, while isoform CB2B is predominant in spleen and leukocytes.

Its subcellular location is the cell membrane. The protein localises to the cell projection. The protein resides in the dendrite. It localises to the perikaryon. Its function is as follows. Heterotrimeric G protein-coupled receptor for endocannabinoid 2-arachidonoylglycerol mediating inhibition of adenylate cyclase. May function in inflammatory response, nociceptive transmission and bone homeostasis. The chain is Cannabinoid receptor 2 (CNR2) from Homo sapiens (Human).